The following is a 501-amino-acid chain: MAVVPGGPSSRPAVGAQFFCTAGRGLEPFLMREVRERLAATQVEYISGKVFFTTCSDLNMLKQLKSAERLFLLIKKQLPFPVSSVSKGKILNELQRLINDDPESWLNAISIWKNLLELDAKKEKLSHKNANPLKRKVGEDDITAKKLKTEQIQELQETKECQLEKQIEEKILEQGNFITEGEKFQKLQDDVTEAVDTRNQTNLTFRVSCRCSGAVAKTLTAQEVGRVIGIALMKQFGWKADLRNPNLEIFIHLSDVYSVLGIPVFRVPLACRAYIKTAGLRSTIAWAMASLAEIKAGAVVLDPMCGLGTILLEAAKEWPHVYYVGADVSDSQLSGAYDNLRAAGLRDKIELLQVSVIELPLPSESVDIIISDIPFGKKFKLGKDIKRMLQEMERVLRVGGTIVLLLSEDHHRHLKGGEASSGPLNSQGGHTEEPGGEERLTPAEKAAVSEPVSSPFAASNQGRLDRMPPLGSLVPVDCYRVSLGKTDALISKYKKSHSPGR.

Positions 149–264 constitute a THUMP domain; the sequence is TEQIQELQET…DVYSVLGIPV (116 aa). Positions 414–469 are disordered; it reads LKGGEASSGPLNSQGGHTEEPGGEERLTPAEKAAVSEPVSSPFAASNQGRLDRMPP. The segment covering 430–442 has biased composition (basic and acidic residues); that stretch reads HTEEPGGEERLTP.

It belongs to the methyltransferase superfamily. In terms of assembly, part of the heterodimeric THUMPD2-TRM112 methyltransferase complex; this complex forms an active tRNA methyltransferase, where TRMT112 acts as an activator of the catalytic subunit THUMPD2.

It is found in the nucleus. It carries out the reaction guanosine in U6 snRNA + S-adenosyl-L-methionine = N(2)-methylguanosine in U6 snRNA + S-adenosyl-L-homocysteine + H(+). In terms of biological role, catalytic subunit of the THUMPD2-TRM112 methyltransferase complex, that specifically mediates the S-adenosyl-L-methionine-dependent N(2)-methylation of guanosine nucleotides, most probably at position 72 (m2G72), in the U6snRNA of the major spliceosome. This modification in the U6 snRNA affects the constitutive splicing efficiency of introns that have suboptimal splice sites and can impact final mRNA levels. The protein is U6 snRNA (guanine-N(2))-methyltransferase THUMPD2 of Bos taurus (Bovine).